A 447-amino-acid polypeptide reads, in one-letter code: GTPase Era, mitochondrial (447 aa).

Residues 1-18 (MTLRSCETFLRRSLRFST) constitute a mitochondrion transit peptide. Residues 109-340 (KSLKVAIVGS…RYLFVAAKPC (232 aa)) enclose the Era-type G domain. Residues 117-124 (GSPNAGKS) form a G1 region. 117–124 (GSPNAGKS) is a GTP binding site. The tract at residues 143-147 (HTTRS) is G2. The segment at 164 to 167 (DTPG) is G3. Residues 164 to 168 (DTPGL) and 233 to 236 (NKVD) contribute to the GTP site. The tract at residues 233–236 (NKVD) is G4. Positions 318–320 (LSS) are G5. The region spanning 370–447 (LPKEVPYTMT…RLKISVKLRK (78 aa)) is the KH type-2 domain.

The protein belongs to the TRAFAC class TrmE-Era-EngA-EngB-Septin-like GTPase superfamily. Era GTPase family.

It is found in the mitochondrion matrix. The protein resides in the mitochondrion inner membrane. Its function is as follows. Probable GTPase that plays a role in the mitochondrial ribosomal small subunit assembly. Specifically binds the 12S mitochondrial rRNA (12S mt-rRNA) to a 33 nucleotide section delineating the 3' terminal stem-loop region. May act as a chaperone that protects the 12S mt-rRNA on the 28S mitoribosomal subunit during ribosomal small subunit assembly. The chain is GTPase Era, mitochondrial (eral1) from Danio rerio (Zebrafish).